Here is a 378-residue protein sequence, read N- to C-terminus: Anhydro-N-acetylmuramic acid kinase (378 aa).

22–29 lines the ATP pocket; sequence GTSLDGAD.

It belongs to the anhydro-N-acetylmuramic acid kinase family.

The catalysed reaction is 1,6-anhydro-N-acetyl-beta-muramate + ATP + H2O = N-acetyl-D-muramate 6-phosphate + ADP + H(+). It functions in the pathway amino-sugar metabolism; 1,6-anhydro-N-acetylmuramate degradation. The protein operates within cell wall biogenesis; peptidoglycan recycling. In terms of biological role, catalyzes the specific phosphorylation of 1,6-anhydro-N-acetylmuramic acid (anhMurNAc) with the simultaneous cleavage of the 1,6-anhydro ring, generating MurNAc-6-P. Is required for the utilization of anhMurNAc either imported from the medium or derived from its own cell wall murein, and thus plays a role in cell wall recycling. The sequence is that of Anhydro-N-acetylmuramic acid kinase from Bordetella petrii (strain ATCC BAA-461 / DSM 12804 / CCUG 43448).